A 1510-amino-acid chain; its full sequence is ABC transporter C family MRP4 (1510 aa).

12 consecutive transmembrane segments (helical) span residues 12 to 32 (EAVA…LLLL), 55 to 75 (PAVV…AGAW), 78 to 98 (AVLA…SYEV), 109 to 129 (ALLL…LALQ), 138 to 158 (FPAL…VIAY), 177 to 197 (MVAN…GVMG), 319 to 339 (TFAA…SYFV), 342 to 362 (LSGN…FFVA), 373 to 393 (WYLG…AMVY), 427 to 447 (AWYF…LAIL), 453 to 473 (IAMV…VPVA), and 540 to 560 (FVFW…CILL). The ABC transmembrane type-1 1 domain occupies 320–595 (FAAVNTIVSY…FPDLISMMAQ (276 aa)). Residues 629-852 (VDIKDGAFSW…GTDFNALVSA (224 aa)) form the ABC transporter 1 domain. 664-671 (GVIGSGKS) contributes to the ATP binding site. The tract at residues 889–925 (LKNKMCENGQPSNTRGIKEKKKKEERKKKRTVQEEER) is disordered. A compositionally biased stretch (basic residues) spans 906–918 (KEKKKKEERKKKR). 6 helical membrane passes run 945 to 965 (GTLI…QIAS), 985 to 1005 (SVVL…FVFM), 1060 to 1082 (IAFR…AVMS), 1086 to 1108 (WQVL…YYIA), 1154 to 1174 (LLDC…WLCL), and 1179 to 1199 (LSTF…PGTI). The 271-residue stretch at 950-1220 (LIILAQTMFQ…GLNLNARMSR (271 aa)) folds into the ABC transmembrane type-1 2 domain. Residues 1267–1501 (IELIDLKVRY…KSSMFIQLVS (235 aa)) form the ABC transporter 2 domain. Residue 1301–1308 (GRTGSGKS) coordinates ATP.

The protein belongs to the ABC transporter superfamily. ABCC family. Conjugate transporter (TC 3.A.1.208) subfamily. Expressed in roots, leaves, stalks, tassels, silks, developing seeds and developing embryos.

The protein localises to the membrane. ABC transporter that may affect phytic acid transport and compartmentalization. May function directly or indirectly in removing phytic acid from the cytosol or in vesicle trafficking. Required for phytic acid accumulation in developing seeds. Phytic acid is the primary storage form of phosphorus in cereal grains and other plant seeds. The protein is ABC transporter C family MRP4 of Zea mays (Maize).